The primary structure comprises 173 residues: T-cell receptor beta-2 chain C region (173 aa).

The tract at residues 1-146 (EDLRNVTPPK…GVLSATILYE (146 aa)) is c region. Asn67 and Asn116 each carry an N-linked (GlcNAc...) asparagine glycan. The helical transmembrane segment at 147 to 168 (ILLGKATLYAVLVSGLVLMAMV) threads the bilayer. Residues 169–173 (KKKNS) lie on the Cytoplasmic side of the membrane.

The protein localises to the membrane. This Mus musculus (Mouse) protein is T-cell receptor beta-2 chain C region.